The chain runs to 89 residues: Cell division topological specificity factor (89 aa).

The protein belongs to the MinE family.

Its function is as follows. Prevents the cell division inhibition by proteins MinC and MinD at internal division sites while permitting inhibition at polar sites. This ensures cell division at the proper site by restricting the formation of a division septum at the midpoint of the long axis of the cell. The polypeptide is Cell division topological specificity factor (Pectobacterium atrosepticum (strain SCRI 1043 / ATCC BAA-672) (Erwinia carotovora subsp. atroseptica)).